Reading from the N-terminus, the 489-residue chain is Mitochondrial-processing peptidase subunit beta (489 aa).

A mitochondrion-targeting transit peptide spans 1 to 45 (MAAAAARVVLLPAARRRLWGFSESLLIRGAAGRSSYFGENRLRST). A Zn(2+)-binding site is contributed by His-101. Glu-104 functions as the Proton acceptor in the catalytic mechanism. The Zn(2+) site is built by His-105 and Glu-181.

It belongs to the peptidase M16 family. In terms of assembly, heterodimer of PMPCA (alpha) and PMPCB (beta) subunits, forming the mitochondrial processing protease (MPP) in which PMPCA is involved in substrate recognition and binding and PMPCB is the catalytic subunit. Requires Zn(2+) as cofactor.

It is found in the mitochondrion matrix. The enzyme catalyses Release of N-terminal transit peptides from precursor proteins imported into the mitochondrion, typically with Arg in position P2.. Its activity is regulated as follows. Binding to PMPCA is required for catalytic activity. Functionally, catalytic subunit of the essential mitochondrial processing protease (MPP), which cleaves the mitochondrial sequence off newly imported precursors proteins. Preferentially, cleaves after an arginine at position P2. Required for PINK1 turnover by coupling PINK1 mitochondrial import and cleavage, which results in subsequent PINK1 proteolysis. The protein is Mitochondrial-processing peptidase subunit beta (PMPCB) of Pongo abelii (Sumatran orangutan).